Consider the following 141-residue polypeptide: Hemoglobin subunit alpha (141 aa).

The Globin domain maps to 1–141; sequence VLSAADKTHV…VSTVLVSKYR (141 aa). Ser-3 carries the post-translational modification Phosphoserine. Lys-7 carries the N6-succinyllysine modification. Position 8 is a phosphothreonine (Thr-8). Lys-11 bears the N6-succinyllysine mark. At Lys-16 the chain carries N6-acetyllysine; alternate. An N6-succinyllysine; alternate modification is found at Lys-16. Ser-35 carries the post-translational modification Phosphoserine. Position 40 is an N6-succinyllysine (Lys-40). Ser-49 is modified (phosphoserine). His-58 serves as a coordination point for O2. His-87 contacts heme b. Position 102 is a phosphoserine (Ser-102). Residue Thr-108 is modified to Phosphothreonine. Ser-124 carries the post-translational modification Phosphoserine. A Phosphothreonine modification is found at Thr-134. Ser-138 bears the Phosphoserine mark.

It belongs to the globin family. In terms of assembly, heterotetramer of two alpha chains and two beta chains. Red blood cells.

Functionally, involved in oxygen transport from the lung to the various peripheral tissues. Hemopressin acts as an antagonist peptide of the cannabinoid receptor CNR1. Hemopressin-binding efficiently blocks cannabinoid receptor CNR1 and subsequent signaling. The sequence is that of Hemoglobin subunit alpha (HBA) from Dasypus novemcinctus (Nine-banded armadillo).